The chain runs to 283 residues: Nucleotide-binding protein THEYE_A0235 (283 aa).

12–19 (GLSGGGKT) contributes to the ATP binding site. 62–65 (DIRV) contributes to the GTP binding site.

Belongs to the RapZ-like family.

Functionally, displays ATPase and GTPase activities. The sequence is that of Nucleotide-binding protein THEYE_A0235 from Thermodesulfovibrio yellowstonii (strain ATCC 51303 / DSM 11347 / YP87).